A 136-amino-acid polypeptide reads, in one-letter code: Large ribosomal subunit protein uL16 (136 aa).

Belongs to the universal ribosomal protein uL16 family. As to quaternary structure, part of the 50S ribosomal subunit.

Binds 23S rRNA and is also seen to make contacts with the A and possibly P site tRNAs. In Aliivibrio salmonicida (strain LFI1238) (Vibrio salmonicida (strain LFI1238)), this protein is Large ribosomal subunit protein uL16.